A 146-amino-acid chain; its full sequence is Mediator of RNA polymerase II transcription subunit 10 (146 aa).

Belongs to the Mediator complex subunit 10 family. As to quaternary structure, component of the Mediator complex.

The protein resides in the nucleus. Its function is as follows. Component of the Mediator complex, a coactivator involved in the regulated transcription of nearly all RNA polymerase II-dependent genes. Mediator functions as a bridge to convey information from gene-specific regulatory proteins to the basal RNA polymerase II transcription machinery. Mediator is recruited to promoters by direct interactions with regulatory proteins and serves as a scaffold for the assembly of a functional preinitiation complex with RNA polymerase II and the general transcription factors. In Scheffersomyces stipitis (strain ATCC 58785 / CBS 6054 / NBRC 10063 / NRRL Y-11545) (Yeast), this protein is Mediator of RNA polymerase II transcription subunit 10 (NUT2).